A 119-amino-acid chain; its full sequence is Autophagy-related protein 8B (119 aa).

G117 carries Phosphatidylethanolamine amidated glycine lipidation. Residues 118–119 (LL) constitute a propeptide, removed in mature form.

The protein belongs to the ATG8 family. Interacts with ATG4. The C-terminal 2 residues are removed by ATG4 to expose Gly-117 at the C-terminus. The C-terminal Gly is then amidated with phosphatidylethanolamine by an activating system similar to that for ubiquitin.

The protein localises to the cytoplasmic vesicle. Its subcellular location is the autophagosome membrane. It localises to the vacuole membrane. The protein resides in the cytoplasm. It is found in the cytoskeleton. Ubiquitin-like modifier involved in autophagosomes formation. May mediate the delivery of the autophagosomes to the vacuole via the microtubule cytoskeleton. This Oryza sativa subsp. indica (Rice) protein is Autophagy-related protein 8B (ATG8B).